A 287-amino-acid polypeptide reads, in one-letter code: 4-hydroxybenzoate octaprenyltransferase (287 aa).

Transmembrane regions (helical) follow at residues 7–27 (FISY…LLLW), 30–50 (LWAL…LIFV), 94–114 (VAVA…LNAF), 118–138 (LSVL…FFAM), 142–162 (VLGI…LDFI), 167–187 (WFLF…YAMV), 209–229 (VVVI…VAQL), 235–255 (YFLV…KLVS), and 266–286 (FRHN…GLGV).

Belongs to the UbiA prenyltransferase family. Requires Mg(2+) as cofactor.

The protein localises to the cell inner membrane. It catalyses the reaction all-trans-octaprenyl diphosphate + 4-hydroxybenzoate = 4-hydroxy-3-(all-trans-octaprenyl)benzoate + diphosphate. Its pathway is cofactor biosynthesis; ubiquinone biosynthesis. Catalyzes the prenylation of para-hydroxybenzoate (PHB) with an all-trans polyprenyl group. Mediates the second step in the final reaction sequence of ubiquinone-8 (UQ-8) biosynthesis, which is the condensation of the polyisoprenoid side chain with PHB, generating the first membrane-bound Q intermediate 3-octaprenyl-4-hydroxybenzoate. This chain is 4-hydroxybenzoate octaprenyltransferase, found in Polynucleobacter necessarius subsp. necessarius (strain STIR1).